We begin with the raw amino-acid sequence, 624 residues long: Actin-related protein 8 (624 aa).

N-acetylmethionine is present on Met1. Basic and acidic residues predominate over residues 1–25 (MTQAEKGEAENGKEKGGEKEKEQRG). A disordered region spans residues 1–29 (MTQAEKGEAENGKEKGGEKEKEQRGVKRP). Positions 55 and 56 each coordinate ATP. A Phosphoserine modification is found at Ser132. 283-286 (DVGD) provides a ligand contact to ATP. Residue Ser412 is modified to Phosphoserine. The interval 430-462 (SKQEQSAKATADRKSASKPIGFEGDLRGQSSDL) is disordered.

Belongs to the actin family. ARP8 subfamily. Component of the chromatin remodeling INO80 complex; specifically part of a complex module associated with the DBINO domain of INO80. Exists as monomers and dimers, but the dimer is most probably the biologically relevant form required for stable interactions with histones that exploits the twofold symmetry of the nucleosome core.

The protein localises to the nucleus. It is found in the chromosome. Functionally, plays an important role in the functional organization of mitotic chromosomes. Exhibits low basal ATPase activity, and unable to polymerize. Its function is as follows. Proposed core component of the chromatin remodeling INO80 complex which is involved in transcriptional regulation, DNA replication and probably DNA repair. Required for the recruitment of INO80 (and probably the INO80 complex) to sites of DNA damage Strongly prefer nucleosomes and H3-H4 tetramers over H2A-H2B dimers, suggesting it may act as a nucleosome recognition module within the complex. The polypeptide is Actin-related protein 8 (ACTR8) (Bos taurus (Bovine)).